The primary structure comprises 323 residues: tRNA U34 carboxymethyltransferase (323 aa).

Carboxy-S-adenosyl-L-methionine contacts are provided by residues Lys-91, Trp-105, Lys-110, Gly-130, 152–154 (DPS), 181–182 (IE), Met-196, Tyr-200, and Arg-315.

The protein belongs to the class I-like SAM-binding methyltransferase superfamily. CmoB family. As to quaternary structure, homotetramer.

It carries out the reaction carboxy-S-adenosyl-L-methionine + 5-hydroxyuridine(34) in tRNA = 5-carboxymethoxyuridine(34) in tRNA + S-adenosyl-L-homocysteine + H(+). Functionally, catalyzes carboxymethyl transfer from carboxy-S-adenosyl-L-methionine (Cx-SAM) to 5-hydroxyuridine (ho5U) to form 5-carboxymethoxyuridine (cmo5U) at position 34 in tRNAs. This is tRNA U34 carboxymethyltransferase from Vibrio campbellii (strain ATCC BAA-1116).